Reading from the N-terminus, the 235-residue chain is dITP/XTP pyrophosphatase (235 aa).

7–12 (STNPGK) contacts substrate. D70 serves as the catalytic Proton acceptor. D70 lines the Mg(2+) pocket. Substrate-binding positions include S71, 180–183 (FGYD), K211, and 216–217 (HR).

It belongs to the HAM1 NTPase family. In terms of assembly, homodimer. Mg(2+) serves as cofactor.

It catalyses the reaction XTP + H2O = XMP + diphosphate + H(+). The catalysed reaction is dITP + H2O = dIMP + diphosphate + H(+). The enzyme catalyses ITP + H2O = IMP + diphosphate + H(+). Its function is as follows. Pyrophosphatase that catalyzes the hydrolysis of nucleoside triphosphates to their monophosphate derivatives, with a high preference for the non-canonical purine nucleotides XTP (xanthosine triphosphate), dITP (deoxyinosine triphosphate) and ITP. Seems to function as a house-cleaning enzyme that removes non-canonical purine nucleotides from the nucleotide pool, thus preventing their incorporation into DNA/RNA and avoiding chromosomal lesions. This is dITP/XTP pyrophosphatase from Anaeromyxobacter dehalogenans (strain 2CP-C).